The primary structure comprises 101 residues: Protein Tat (101 aa).

Residues 1-24 (MEPVDPNLEPWKHPGSQPRTACTN) are interaction with human CREBBP. The tract at residues 1 to 48 (MEPVDPNLEPWKHPGSQPRTACTNCYCKKCCFHCQVCFITKGLGISYG) is transactivation. Cys22, Cys25, and Cys27 together coordinate Zn(2+). The interval 22-37 (CTNCYCKKCCFHCQVC) is cysteine-rich. N6-acetyllysine; by host PCAF is present on Lys28. Positions 30, 33, 34, and 37 each coordinate Zn(2+). A core region spans residues 38–48 (FITKGLGISYG). A disordered region spans residues 48 to 101 (GRKKRRQRQRAPDSSQNHQDSLSKQPSSQPRGDPTGPKESKKEVERETETDPLD). The Nuclear localization signal, RNA-binding (TAR), and protein transduction motif lies at 49 to 57 (RKKRRQRQR). The interval 49–86 (RKKRRQRQRAPDSSQNHQDSLSKQPSSQPRGDPTGPKE) is interaction with the host capping enzyme RNGTT. Residues Lys50 and Lys51 each carry the N6-acetyllysine; by host EP300 and GCN5L2 modification. Asymmetric dimethylarginine; by host PRMT6 occurs at positions 52 and 53. Polar residues predominate over residues 59–77 (PDSSQNHQDSLSKQPSSQP). Lys71 participates in a covalent cross-link: Glycyl lysine isopeptide (Lys-Gly) (interchain with G-Cter in ubiquitin). Positions 78-80 (RGD) match the Cell attachment site motif. Positions 83-101 (GPKESKKEVERETETDPLD) are enriched in basic and acidic residues.

Belongs to the lentiviruses Tat family. In terms of assembly, interacts with host CCNT1. Associates with the P-TEFb complex composed at least of Tat, P-TEFb (CDK9 and CCNT1), TAR RNA, RNA Pol II. Recruits the HATs CREBBP, TAF1/TFIID, EP300, PCAF and GCN5L2. Interacts with host KAT5/Tip60; this interaction targets the latter to degradation. Interacts with the host deacetylase SIRT1. Interacts with host capping enzyme RNGTT; this interaction stimulates RNGTT. Binds to host KDR, and to the host integrins ITGAV/ITGB3 and ITGA5/ITGB1. Interacts with host KPNB1/importin beta-1 without previous binding to KPNA1/importin alpha-1. Interacts with EIF2AK2. Interacts with host nucleosome assembly protein NAP1L1; this interaction may be required for the transport of Tat within the nucleus, since the two proteins interact at the nuclear rim. Interacts with host C1QBP/SF2P32; this interaction involves lysine-acetylated Tat. Interacts with the host chemokine receptors CCR2, CCR3 and CXCR4. Interacts with host DPP4/CD26; this interaction may trigger an anti-proliferative effect. Interacts with host LDLR. Interacts with the host extracellular matrix metalloproteinase MMP1. Interacts with host PRMT6; this interaction mediates Tat's methylation. Interacts with, and is ubiquitinated by MDM2/Hdm2. Interacts with host PSMC3 and HTATIP2. Interacts with STAB1; this interaction may overcome SATB1-mediated repression of IL2 and IL2RA (interleukin) in T cells by binding to the same domain than HDAC1. Interacts (when acetylated) with human CDK13, thereby increasing HIV-1 mRNA splicing and promoting the production of the doubly spliced HIV-1 protein Nef. Interacts with host TBP; this interaction modulates the activity of transcriptional pre-initiation complex. Interacts with host RELA. Interacts with host PLSCR1; this interaction negatively regulates Tat transactivation activity by altering its subcellular distribution. Post-translationally, asymmetrical arginine methylation by host PRMT6 seems to diminish the transactivation capacity of Tat and affects the interaction with host CCNT1. In terms of processing, acetylation by EP300, CREBBP, GCN5L2/GCN5 and PCAF regulates the transactivation activity of Tat. EP300-mediated acetylation of Lys-50 promotes dissociation of Tat from the TAR RNA through the competitive binding to PCAF's bromodomain. In addition, the non-acetylated Tat's N-terminus can also interact with PCAF. PCAF-mediated acetylation of Lys-28 enhances Tat's binding to CCNT1. Lys-50 is deacetylated by SIRT1. Polyubiquitination by host MDM2 does not target Tat to degradation, but activates its transactivation function and fosters interaction with CCNT1 and TAR RNA. Post-translationally, phosphorylated by EIF2AK2 on serine and threonine residues adjacent to the basic region important for TAR RNA binding and function. Phosphorylation of Tat by EIF2AK2 is dependent on the prior activation of EIF2AK2 by dsRNA.

The protein resides in the host nucleus. It is found in the host nucleolus. Its subcellular location is the host cytoplasm. It localises to the secreted. Transcriptional activator that increases RNA Pol II processivity, thereby increasing the level of full-length viral transcripts. Recognizes a hairpin structure at the 5'-LTR of the nascent viral mRNAs referred to as the transactivation responsive RNA element (TAR) and recruits the cyclin T1-CDK9 complex (P-TEFb complex) that will in turn hyperphosphorylate the RNA polymerase II to allow efficient elongation. The CDK9 component of P-TEFb and other Tat-activated kinases hyperphosphorylate the C-terminus of RNA Pol II that becomes stabilized and much more processive. Other factors such as HTATSF1/Tat-SF1, SUPT5H/SPT5, and HTATIP2 are also important for Tat's function. Besides its effect on RNA Pol II processivity, Tat induces chromatin remodeling of proviral genes by recruiting the histone acetyltransferases (HATs) CREBBP, EP300 and PCAF to the chromatin. This also contributes to the increase in proviral transcription rate, especially when the provirus integrates in transcriptionally silent region of the host genome. To ensure maximal activation of the LTR, Tat mediates nuclear translocation of NF-kappa-B by interacting with host RELA. Through its interaction with host TBP, Tat may also modulate transcription initiation. Tat can reactivate a latently infected cell by penetrating in it and transactivating its LTR promoter. In the cytoplasm, Tat is thought to act as a translational activator of HIV-1 mRNAs. Its function is as follows. Extracellular circulating Tat can be endocytosed by surrounding uninfected cells via the binding to several surface receptors such as CD26, CXCR4, heparan sulfate proteoglycans (HSPG) or LDLR. Neurons are rarely infected, but they internalize Tat via their LDLR. Through its interaction with nuclear HATs, Tat is potentially able to control the acetylation-dependent cellular gene expression. Modulates the expression of many cellular genes involved in cell survival, proliferation or in coding for cytokines or cytokine receptors. Tat plays a role in T-cell and neurons apoptosis. Tat induced neurotoxicity and apoptosis probably contribute to neuroAIDS. Circulating Tat also acts as a chemokine-like and/or growth factor-like molecule that binds to specific receptors on the surface of the cells, affecting many cellular pathways. In the vascular system, Tat binds to ITGAV/ITGB3 and ITGA5/ITGB1 integrins dimers at the surface of endothelial cells and competes with bFGF for heparin-binding sites, leading to an excess of soluble bFGF. This chain is Protein Tat, found in Human immunodeficiency virus type 1 group M subtype B (isolate SF33) (HIV-1).